Here is a 675-residue protein sequence, read N- to C-terminus: DNA gyrase subunit B (675 aa).

The 115-residue stretch at 453 to 567 (SELYVVEGDS…NGHIFLAQPP (115 aa)) folds into the Toprim domain. 3 residues coordinate Mg(2+): Glu-459, Asp-532, and Asp-534.

This sequence belongs to the type II topoisomerase GyrB family. In terms of assembly, heterotetramer, composed of two GyrA and two GyrB chains. In the heterotetramer, GyrA contains the active site tyrosine that forms a transient covalent intermediate with DNA, while GyrB binds cofactors and catalyzes ATP hydrolysis. Mg(2+) is required as a cofactor. Requires Mn(2+) as cofactor. Ca(2+) serves as cofactor.

It localises to the cytoplasm. It catalyses the reaction ATP-dependent breakage, passage and rejoining of double-stranded DNA.. Its activity is regulated as follows. Inhibited by 4-quinoline drugs (nalidixic acid, ciprofloxacin, ofloxacin), although it is much less sensitive than the corresponding enzyme from E.coli. GyrB intrinsic ATPase activity inhibited by aminopyrazinamide and pyrrolamide derivatives. Functionally, a type II topoisomerase that negatively supercoils closed circular double-stranded (ds) DNA in an ATP-dependent manner to modulate DNA topology and maintain chromosomes in an underwound state. Negative supercoiling favors strand separation, and DNA replication, transcription, recombination and repair, all of which involve strand separation. Also able to catalyze the interconversion of other topological isomers of dsDNA rings, including catenanes and knotted rings. Type II topoisomerases break and join 2 DNA strands simultaneously in an ATP-dependent manner. This chain is DNA gyrase subunit B, found in Mycolicibacterium smegmatis (strain ATCC 700084 / mc(2)155) (Mycobacterium smegmatis).